Consider the following 874-residue polypeptide: Alanine--tRNA ligase (874 aa).

Zn(2+) contacts are provided by H564, H568, C665, and H669.

The protein belongs to the class-II aminoacyl-tRNA synthetase family. Zn(2+) serves as cofactor.

The protein localises to the cytoplasm. The catalysed reaction is tRNA(Ala) + L-alanine + ATP = L-alanyl-tRNA(Ala) + AMP + diphosphate. Catalyzes the attachment of alanine to tRNA(Ala) in a two-step reaction: alanine is first activated by ATP to form Ala-AMP and then transferred to the acceptor end of tRNA(Ala). Also edits incorrectly charged Ser-tRNA(Ala) and Gly-tRNA(Ala) via its editing domain. The protein is Alanine--tRNA ligase of Burkholderia multivorans (strain ATCC 17616 / 249).